A 169-amino-acid chain; its full sequence is Fumarase E (169 aa).

Belongs to the MtlR/FumE family. As to quaternary structure, homodimer.

It catalyses the reaction (S)-malate = fumarate + H2O. In terms of biological role, in vitro catalyzes the addition of water to fumarate, forming malate. Cannot catalyze the reverse reaction. Cannot use the cis-isomer maleate as substrate. This is Fumarase E from Shigella flexneri.